The primary structure comprises 395 residues: Argininosuccinate synthase (395 aa).

Residue Leu7–Ser15 participates in ATP binding. Tyr83 provides a ligand contact to L-citrulline. Gly113 contributes to the ATP binding site. Positions 115, 119, and 120 each coordinate L-aspartate. Asn119 provides a ligand contact to L-citrulline. L-citrulline contacts are provided by Arg123, Ser169, Ser178, Glu253, and Tyr265.

Belongs to the argininosuccinate synthase family. Type 1 subfamily. As to quaternary structure, homotetramer.

It is found in the cytoplasm. The enzyme catalyses L-citrulline + L-aspartate + ATP = 2-(N(omega)-L-arginino)succinate + AMP + diphosphate + H(+). Its pathway is amino-acid biosynthesis; L-arginine biosynthesis; L-arginine from L-ornithine and carbamoyl phosphate: step 2/3. The chain is Argininosuccinate synthase from Picrophilus torridus (strain ATCC 700027 / DSM 9790 / JCM 10055 / NBRC 100828 / KAW 2/3).